An 854-amino-acid polypeptide reads, in one-letter code: Leucine--tRNA ligase (854 aa).

The tract at residues 1–32 is disordered; that stretch reads MARRDMAAETMDPRASTEPSPNEPREPARYDH. Residues 23–32 are compositionally biased toward basic and acidic residues; sequence EPREPARYDH. The 'HIGH' region signature appears at 69–80; the sequence is PYPSGSGLHVGH. The 'KMSKS' region motif lies at 633 to 637; the sequence is KMSKS. An ATP-binding site is contributed by Lys636.

This sequence belongs to the class-I aminoacyl-tRNA synthetase family.

It is found in the cytoplasm. It catalyses the reaction tRNA(Leu) + L-leucine + ATP = L-leucyl-tRNA(Leu) + AMP + diphosphate. In Sorangium cellulosum (strain So ce56) (Polyangium cellulosum (strain So ce56)), this protein is Leucine--tRNA ligase.